A 476-amino-acid polypeptide reads, in one-letter code: ATP synthase subunit beta, chloroplastic (476 aa).

153-160 (GGAGVGKT) is a binding site for ATP.

It belongs to the ATPase alpha/beta chains family. As to quaternary structure, F-type ATPases have 2 components, CF(1) - the catalytic core - and CF(0) - the membrane proton channel. CF(1) has five subunits: alpha(3), beta(3), gamma(1), delta(1), epsilon(1). CF(0) has four main subunits: a(1), b(1), b'(1) and c(9-12).

It localises to the plastid. The protein localises to the chloroplast thylakoid membrane. It catalyses the reaction ATP + H2O + 4 H(+)(in) = ADP + phosphate + 5 H(+)(out). In terms of biological role, produces ATP from ADP in the presence of a proton gradient across the membrane. The catalytic sites are hosted primarily by the beta subunits. This Dicksonia antarctica (Australian tree fern) protein is ATP synthase subunit beta, chloroplastic.